Reading from the N-terminus, the 160-residue chain is Ureidoglycolate lyase (160 aa).

This sequence belongs to the ureidoglycolate lyase family. As to quaternary structure, homodimer. Ni(2+) serves as cofactor.

The catalysed reaction is (S)-ureidoglycolate = urea + glyoxylate. The protein operates within nitrogen metabolism; (S)-allantoin degradation. Functionally, catalyzes the catabolism of the allantoin degradation intermediate (S)-ureidoglycolate, generating urea and glyoxylate. Involved in the anaerobic utilization of allantoin as sole nitrogen source. Reinforces the induction of genes involved in the degradation of allantoin and glyoxylate by producing glyoxylate. This chain is Ureidoglycolate lyase, found in Escherichia coli (strain K12 / MC4100 / BW2952).